The primary structure comprises 316 residues: Acetyl-coenzyme A carboxylase carboxyl transferase subunit beta (316 aa).

The CoA carboxyltransferase N-terminal domain occupies 29–298; the sequence is LWTKCPNCGV…LLSPLNSHHH (270 aa). 4 residues coordinate Zn(2+): cysteine 33, cysteine 36, cysteine 52, and cysteine 55. A C4-type zinc finger spans residues 33-55; sequence CPNCGVLAYTKDLLANQLVCLDC.

The protein belongs to the AccD/PCCB family. As to quaternary structure, acetyl-CoA carboxylase is a heterohexamer composed of biotin carboxyl carrier protein (AccB), biotin carboxylase (AccC) and two subunits each of ACCase subunit alpha (AccA) and ACCase subunit beta (AccD). The cofactor is Zn(2+).

It is found in the cytoplasm. It carries out the reaction N(6)-carboxybiotinyl-L-lysyl-[protein] + acetyl-CoA = N(6)-biotinyl-L-lysyl-[protein] + malonyl-CoA. Its pathway is lipid metabolism; malonyl-CoA biosynthesis; malonyl-CoA from acetyl-CoA: step 1/1. Component of the acetyl coenzyme A carboxylase (ACC) complex. Biotin carboxylase (BC) catalyzes the carboxylation of biotin on its carrier protein (BCCP) and then the CO(2) group is transferred by the transcarboxylase to acetyl-CoA to form malonyl-CoA. The chain is Acetyl-coenzyme A carboxylase carboxyl transferase subunit beta from Microcystis aeruginosa (strain NIES-843 / IAM M-2473).